Reading from the N-terminus, the 79-residue chain is Small ribosomal subunit protein bS18c (79 aa).

Belongs to the bacterial ribosomal protein bS18 family. As to quaternary structure, part of the 30S ribosomal subunit.

The protein localises to the plastid. Its subcellular location is the chloroplast. This Physcomitrium patens (Spreading-leaved earth moss) protein is Small ribosomal subunit protein bS18c.